An 847-amino-acid polypeptide reads, in one-letter code: DNA ligase (847 aa).

Residues 1–22 (MSDTTTGSDAADAAVPATTPAD) show a composition bias toward low complexity. The segment at 1–23 (MSDTTTGSDAADAAVPATTPADL) is disordered. NAD(+) contacts are provided by residues 54–58 (DAEYD), 104–105 (SL), and Glu-135. Catalysis depends on Lys-137, which acts as the N6-AMP-lysine intermediate. Positions 158, 195, 326, and 350 each coordinate NAD(+). Residues Cys-444, Cys-447, Cys-463, and Cys-469 each contribute to the Zn(2+) site. Residues 686–775 (AAGGVLAGLA…PDAIALPEAD (90 aa)) form the BRCT domain. The interval 770–847 (ALPEADPVPD…AEPDGPAETP (78 aa)) is disordered. Low complexity-rich tracts occupy residues 786–807 (DGGS…ATAE) and 819–833 (PAAA…VEAG).

The protein belongs to the NAD-dependent DNA ligase family. LigA subfamily. Requires Mg(2+) as cofactor. It depends on Mn(2+) as a cofactor.

The enzyme catalyses NAD(+) + (deoxyribonucleotide)n-3'-hydroxyl + 5'-phospho-(deoxyribonucleotide)m = (deoxyribonucleotide)n+m + AMP + beta-nicotinamide D-nucleotide.. Functionally, DNA ligase that catalyzes the formation of phosphodiester linkages between 5'-phosphoryl and 3'-hydroxyl groups in double-stranded DNA using NAD as a coenzyme and as the energy source for the reaction. It is essential for DNA replication and repair of damaged DNA. The protein is DNA ligase of Clavibacter sepedonicus (Clavibacter michiganensis subsp. sepedonicus).